A 649-amino-acid chain; its full sequence is MGEAVYPVPAEWAQNALVDEARYQDMYRQSVDDPEGFWAEHGKRIDWIRPFTKVKNTSFHEADFGIRWFEDGTLNLAANCLDRHLAERGDEIAILWEPDSPDEAHREITYRQLHADVCRFANLLKAKGVQKGERVTIYLPMVPEAAVAMLACARIGAIHSIVFAGFSPDALAGRITDCDSRIVLTSDEGLRGGRKVPLKANVDEALKQCPGVDTVIMLRRTGADVDFVEGRDIDWATAVAEQSADCQPEEMNAEDPLFILYTSGSTGKPKGVLHTTGGYSVWASMTHQYVFDYRPGQIYWCAADIGWVTGHSYVVYGPLMNGATTVMFEGVPNFPDASRFWQVVDKFKVEIFYGAPTALRALMREGDEWVKKTSRASLRLLGSVGEPINPEAWEWYHKVVGDSRCPIVDTWWQTETGGAMITPLPGATALKPGSASRPFFGVKPALVDNDGTFLEGATDGCLVVTDSWPGQMRTVWGDHERFFQTYFTTFKGLYFTGDGCRRDEDGYYWITGRIDDVINVSGHRMGTAEIESALVAHPKVAEAAVVGMPHDIKGQGIYAFVTCNAEIEPDDLLRKELIQWVRHEIGPIATPDVIQFAPGLPKTRSGKIMRRILRKIGENDVSNLGDTSTLADPSVVDNLLANRPQLAGA.

Residues 191-194, Thr-309, and Asn-333 contribute to the CoA site; that span reads RGGR. Residues 385-387, 409-414, Asp-498, and Arg-513 each bind ATP; these read GEP and DTWWQT. Ser-521 is a binding site for CoA. Arg-524 is an ATP binding site. The Mg(2+) site is built by Val-535, His-537, and Val-540. Arg-582 contacts CoA. Residue Lys-607 is modified to N6-acetyllysine.

It belongs to the ATP-dependent AMP-binding enzyme family. It depends on Mg(2+) as a cofactor. In terms of processing, acetylated. Deacetylation by the SIR2-homolog deacetylase activates the enzyme.

It carries out the reaction acetate + ATP + CoA = acetyl-CoA + AMP + diphosphate. Its function is as follows. Catalyzes the conversion of acetate into acetyl-CoA (AcCoA), an essential intermediate at the junction of anabolic and catabolic pathways. AcsA undergoes a two-step reaction. In the first half reaction, AcsA combines acetate with ATP to form acetyl-adenylate (AcAMP) intermediate. In the second half reaction, it can then transfer the acetyl group from AcAMP to the sulfhydryl group of CoA, forming the product AcCoA. The polypeptide is Acetyl-coenzyme A synthetase (Novosphingobium aromaticivorans (strain ATCC 700278 / DSM 12444 / CCUG 56034 / CIP 105152 / NBRC 16084 / F199)).